The sequence spans 262 residues: Thiazole synthase (262 aa).

K97 serves as the catalytic Schiff-base intermediate with DXP. Residues G158, 185–186 (AG), and 207–208 (NT) each bind 1-deoxy-D-xylulose 5-phosphate. The tract at residues 243–262 (DKAQASTPTVGQPFWHSAEY) is disordered.

This sequence belongs to the ThiG family. In terms of assembly, homotetramer. Forms heterodimers with either ThiH or ThiS.

It is found in the cytoplasm. It carries out the reaction [ThiS sulfur-carrier protein]-C-terminal-Gly-aminoethanethioate + 2-iminoacetate + 1-deoxy-D-xylulose 5-phosphate = [ThiS sulfur-carrier protein]-C-terminal Gly-Gly + 2-[(2R,5Z)-2-carboxy-4-methylthiazol-5(2H)-ylidene]ethyl phosphate + 2 H2O + H(+). It functions in the pathway cofactor biosynthesis; thiamine diphosphate biosynthesis. Functionally, catalyzes the rearrangement of 1-deoxy-D-xylulose 5-phosphate (DXP) to produce the thiazole phosphate moiety of thiamine. Sulfur is provided by the thiocarboxylate moiety of the carrier protein ThiS. In vitro, sulfur can be provided by H(2)S. The protein is Thiazole synthase of Neisseria meningitidis serogroup C (strain 053442).